The primary structure comprises 827 residues: Putative transcriptional regulatory protein C16G5.16 (827 aa).

The zn(2)-C6 fungal-type DNA-binding region spans 16–42; that stretch reads CDECHRRKIKCDQRRPCSNCIAYNYEC. Disordered regions lie at residues 80-114, 158-193, and 794-827; these read LKLP…SSQD, TVPN…HKKP, and QPPS…KRTE. Residues 102–112 are compositionally biased toward basic and acidic residues; sequence KRSDSSKRSSS. A Phosphoserine modification is found at S112. Composition is skewed to low complexity over residues 159 to 179 and 811 to 827; these read VPNP…LSFP and SNNS…KRTE.

The protein belongs to the ASG1 family.

It is found in the cytoplasm. The protein localises to the nucleus. This is Putative transcriptional regulatory protein C16G5.16 from Schizosaccharomyces pombe (strain 972 / ATCC 24843) (Fission yeast).